The following is a 326-amino-acid chain: Sucrose operon repressor (326 aa).

In terms of domain architecture, HTH lacI-type spans 1–57 (MKPKLNDVAKLAGVSATTVSRVINNHGYLSSQTKEKVFAAMRELHYQPNNMARSLQG). A DNA-binding region (H-T-H motif) is located at residues 5–24 (LNDVAKLAGVSATTVSRVIN).

Functionally, negative regulator of scrB expression. This is Sucrose operon repressor (scrR) from Pediococcus pentosaceus.